Reading from the N-terminus, the 65-residue chain is MAVVPKRKTSKQRKALRRSHHALEALTLVECKNCKQSIVPHQACKYCGFYKDKKVIKVALNDQVK.

It belongs to the bacterial ribosomal protein bL32 family.

The protein is Large ribosomal subunit protein bL32 of Metamycoplasma arthritidis (strain 158L3-1) (Mycoplasma arthritidis).